Here is a 496-residue protein sequence, read N- to C-terminus: Protein RepR (496 aa).

Residues 120–141 mediate DNA binding; the sequence is SDILTTAIDLGFMPTLIIKSDK.

Functionally, essential for replication. This is Protein RepR (repR) from Streptococcus agalactiae.